An 805-amino-acid polypeptide reads, in one-letter code: Arginine/serine-rich protein PNISR (805 aa).

Polar residues predominate over residues 75 to 88 (NNHGNFQGDSNFNR). 2 disordered regions span residues 75-331 (NNHG…EEKE) and 382-805 (LTGL…SRSR). Composition is skewed to pro residues over residues 100–115 (PPHPPPEQPWMPPAPG) and 183–194 (YWQPGPPGPPAP). Basic and acidic residues predominate over residues 197-210 (NRRERPPSFRDRQR). 2 positions are modified to phosphoserine: Ser204 and Ser211. Lys218 is covalently cross-linked (Glycyl lysine isopeptide (Lys-Gly) (interchain with G-Cter in SUMO2)). Positions 237–276 (REGLEKMEREKQKKLEKERMEQQRSQLSKKEKKATEDAEG) form a coiled coil. Positions 238–258 (EGLEKMEREKQKKLEKERMEQ) are enriched in basic and acidic residues. 4 positions are modified to phosphoserine: Ser290, Ser304, Ser313, and Ser321. Residues 290-299 (SDEEDEDAEN) are compositionally biased toward acidic residues. Over residues 384–393 (GLGGLGGYGS) the composition is skewed to gly residues. Over residues 421 to 463 (QKQEAFWRKEKEQQLLQDKQIEEEKQQTERVTKEMNEFIHREQ) the composition is skewed to basic and acidic residues. Positions 427-461 (WRKEKEQQLLQDKQIEEEKQQTERVTKEMNEFIHR) form a coiled coil. A phosphoserine mark is found at Ser465 and Ser467. Basic and acidic residues-rich tracts occupy residues 473–486 (EADRDAVNDKKRTP) and 494–508 (EPKREHKGKEKERGS). A Phosphothreonine modification is found at Thr485. Residue Lys496 forms a Glycyl lysine isopeptide (Lys-Gly) (interchain with G-Cter in SUMO2) linkage. Residues 509–550 (RSGSSSSGSSSSGSRTSSSSSSVSSSSYSSSSGSSCTSSRSS) show a composition bias toward low complexity. Basic residues-rich tracts occupy residues 551–560 (SPKRRKRPSR), 567–579 (KARRSRSRSYSRR), 587–598 (TRGKLRDRRRSN), and 607–639 (RRNRSPSRDRRRSRSRSRDRRTNRSSRSRSRDR). Positions 659 to 721 (EAKEQDRKKE…KRKRESERTF (63 aa)) are enriched in basic and acidic residues. Lys703 participates in a covalent cross-link: Glycyl lysine isopeptide (Lys-Gly) (interchain with G-Cter in SUMO2). Ser726 is subject to Phosphoserine. Residues 732-753 (IRHDSRQDSKKNATKDSKRHSG) are compositionally biased toward basic and acidic residues. A compositionally biased stretch (low complexity) spans 754–767 (SDSSGRSSSESPGS). Basic residues-rich tracts occupy residues 771 to 781 (KKAKKPKHSRS) and 789 to 805 (RSGKKASRKHKSKSRSR).

Belongs to the splicing factor SR family. In terms of assembly, interacts with PNN.

Its subcellular location is the nucleus speckle. The polypeptide is Arginine/serine-rich protein PNISR (Pnisr) (Mus musculus (Mouse)).